Consider the following 436-residue polypeptide: MTKPIVAIVGRPNVGKSTIFNRVVGERVSIVEDTPGVTRDRIYSSGEWLTHEFNIIDTGGIEIGDAPFQTQIRAQAEIAIDEADVIIFMVNVREGLTQSDEMVAQMLYKSKKPVVLAVNKVDNPEMRNDIFDFYSLGFGDPYPISGSHGLGLGDLLDEVVKHFDEETEDSYDEDTIRLSIIGRPNVGKSSLVNAILGEDRVIVSNVAGTTRDAVDTEYSYDGQDYVLIDTAGMRKKGKVYESTEKYSVLRALKAIERSNVVLIVIDAEEGIIEQDKRVAGYAHEEGKAVVIVVNKWDTVDKDSNTMKKFADDVRNQFQFLDYAQIAFVSAKEGTRLRTLFPYINEASENHKKRVQSSTLNEVVTDAISMNPTPTDKGRRLNVFYTTQVANEPPTFVVFVNDVELMHFSYKRYLENQIRHAFGFEGTPIHIIPRRRN.

EngA-type G domains follow at residues 4–167 (PIVA…DEET) and 176–351 (IRLS…ENHK). Residues 10-17 (GRPNVGKS), 57-61 (DTGGI), 119-122 (NKVD), 182-189 (GRPNVGKS), 229-233 (DTAGM), and 294-297 (NKWD) each bind GTP. The 85-residue stretch at 352–436 (KRVQSSTLNE…PIHIIPRRRN (85 aa)) folds into the KH-like domain.

It belongs to the TRAFAC class TrmE-Era-EngA-EngB-Septin-like GTPase superfamily. EngA (Der) GTPase family. In terms of assembly, associates with the 50S ribosomal subunit.

Functionally, GTPase that plays an essential role in the late steps of ribosome biogenesis. The protein is GTPase Der of Staphylococcus haemolyticus (strain JCSC1435).